A 464-amino-acid chain; its full sequence is ATP synthase subunit beta (464 aa).

Residue 148 to 155 (GGAGVGKT) coordinates ATP.

Belongs to the ATPase alpha/beta chains family. F-type ATPases have 2 components, CF(1) - the catalytic core - and CF(0) - the membrane proton channel. CF(1) has five subunits: alpha(3), beta(3), gamma(1), delta(1), epsilon(1). CF(0) has three main subunits: a(1), b(2) and c(9-12). The alpha and beta chains form an alternating ring which encloses part of the gamma chain. CF(1) is attached to CF(0) by a central stalk formed by the gamma and epsilon chains, while a peripheral stalk is formed by the delta and b chains.

It localises to the cell inner membrane. The enzyme catalyses ATP + H2O + 4 H(+)(in) = ADP + phosphate + 5 H(+)(out). In terms of biological role, produces ATP from ADP in the presence of a proton gradient across the membrane. The catalytic sites are hosted primarily by the beta subunits. In Acinetobacter baylyi (strain ATCC 33305 / BD413 / ADP1), this protein is ATP synthase subunit beta.